Here is a 158-residue protein sequence, read N- to C-terminus: NAD(P)H-quinone oxidoreductase subunit J, chloroplastic (158 aa).

The protein belongs to the complex I 30 kDa subunit family. As to quaternary structure, NDH is composed of at least 16 different subunits, 5 of which are encoded in the nucleus.

Its subcellular location is the plastid. It localises to the chloroplast thylakoid membrane. The enzyme catalyses a plastoquinone + NADH + (n+1) H(+)(in) = a plastoquinol + NAD(+) + n H(+)(out). The catalysed reaction is a plastoquinone + NADPH + (n+1) H(+)(in) = a plastoquinol + NADP(+) + n H(+)(out). In terms of biological role, NDH shuttles electrons from NAD(P)H:plastoquinone, via FMN and iron-sulfur (Fe-S) centers, to quinones in the photosynthetic chain and possibly in a chloroplast respiratory chain. The immediate electron acceptor for the enzyme in this species is believed to be plastoquinone. Couples the redox reaction to proton translocation, and thus conserves the redox energy in a proton gradient. The polypeptide is NAD(P)H-quinone oxidoreductase subunit J, chloroplastic (Psilotum nudum (Whisk fern)).